The following is a 1277-amino-acid chain: Y' element ATP-dependent helicase YEL077C (1277 aa).

The 178-residue stretch at 222-399 (EIYMADTPSV…LQRIGLTGLA (178 aa)) folds into the Helicase ATP-binding domain. 235-242 (APPGYGKT) provides a ligand contact to ATP. The short motif at 345-348 (DEFH) is the DEAH box element. A Helicase C-terminal domain is found at 454–605 (ALKLLLALFE…EFYGLESKKG (152 aa)). Disordered regions lie at residues 696-763 (NVRT…NATT) and 775-895 (TTKS…NRFH). A compositionally biased stretch (low complexity) spans 775–878 (TTKSINSSTN…ATTTESTNAS (104 aa)). Positions 879–895 (AKEDANKDGNAEDNRFH) are enriched in basic and acidic residues.

Belongs to the helicase family. Yeast subtelomeric Y' repeat subfamily.

Functionally, catalyzes DNA unwinding and is involved in telomerase-independent telomere maintenance. The protein is Y' element ATP-dependent helicase YEL077C of Saccharomyces cerevisiae (strain ATCC 204508 / S288c) (Baker's yeast).